The following is a 459-amino-acid chain: MFRYDQVAHLTDQAYIDDLCDRVEQGLDQGLLPSHVFRDERVFKVEMDRIFTRAWVFVAHETEIPKSGDFVLRKVGLDQVIVTRSAGGAINVLLNHCRHRGTEVCHEDSGNTTHFKCPYHGWIYKNDGDFVGAPAMREAYGGRLDSKKNGLLRAPQVESYHGFIFTCLSESGPSLSEYLGDVSWMLDAIVKLHPAGLKVLGAPERFIIRTDWKIGAENFAGDVYHIATAHLSVNETKYISQDMRDTLKTGGGYRFQNGHGFITHRSSEMVGAEGGLWAYGLNPEIRKQFDLEGFDDAQKKMLLEAPPVAGNIFPNFSYLRGALPANAGDLPVVFTNFRLWQPVEPGVMEVWNWQFSYDALPDEYNREAYAAGQLAFSAAGLFDQDDSAVWEGVAKLGGSPWGRKEEVMLHYGQQRVEPDSTYEGKGDYFPSTFGEFNQENFWREWVKQLRSDVRNEVPA.

The Rieske domain occupies 55 to 166 (WVFVAHETEI…VESYHGFIFT (112 aa)). Residues Cys97, His99, Cys117, and His120 each coordinate [2Fe-2S] cluster. Residues His225, His230, and Asp386 each contribute to the Fe cation site.

This sequence belongs to the bacterial ring-hydroxylating dioxygenase alpha subunit family. As to quaternary structure, pdmA (subunit alpha) and PdmB (subunit beta) form the oxygenase component of a bacterial Rieske non-heme iron oxygenase (RO) system. It depends on [2Fe-2S] cluster as a cofactor. The cofactor is Fe cation.

The catalysed reaction is a 1,1-dimethyl-3-phenylurea + 2 reduced [2Fe-2S]-[ferredoxin] + O2 + 2 H(+) = a 1-methyl-3-phenylurea + formaldehyde + 2 oxidized [2Fe-2S]-[ferredoxin] + H2O. It catalyses the reaction isoproturon + 2 reduced [2Fe-2S]-[ferredoxin] + O2 + 2 H(+) = 1-methyl-3-[4-(propan-2-yl)phenyl]urea + formaldehyde + 2 oxidized [2Fe-2S]-[ferredoxin] + H2O. It carries out the reaction chlorotoluron + 2 reduced [2Fe-2S]-[ferredoxin] + O2 + 2 H(+) = 3-(3-chloro-4-methylphenyl)-1-methylurea + formaldehyde + 2 oxidized [2Fe-2S]-[ferredoxin] + H2O. The enzyme catalyses metoxuron + 2 reduced [2Fe-2S]-[ferredoxin] + O2 + 2 H(+) = 3-(3-chloro-4-methoxylphenyl)-1-methylurea + formaldehyde + 2 oxidized [2Fe-2S]-[ferredoxin] + H2O. The catalysed reaction is monuron + 2 reduced [2Fe-2S]-[ferredoxin] + O2 + 2 H(+) = 3-(4-chlorophenyl)-1-methylurea + formaldehyde + 2 oxidized [2Fe-2S]-[ferredoxin] + H2O. It catalyses the reaction diuron + 2 reduced [2Fe-2S]-[ferredoxin] + O2 + 2 H(+) = 3-(3,4-dichlorophenyl)-1-methylurea + formaldehyde + 2 oxidized [2Fe-2S]-[ferredoxin] + H2O. It carries out the reaction fluometuron + 2 reduced [2Fe-2S]-[ferredoxin] + O2 + 2 H(+) = 3-[3-(trifluoromethyl)phenyl]-1-methylurea + formaldehyde + 2 oxidized [2Fe-2S]-[ferredoxin] + H2O. The enzyme catalyses fenuron + 2 reduced [2Fe-2S]-[ferredoxin] + O2 + 2 H(+) = 1-methyl-3-phenylurea + formaldehyde + 2 oxidized [2Fe-2S]-[ferredoxin] + H2O. Its pathway is xenobiotic degradation. With respect to regulation, activity is stimulated in vitro by coexpression of a [3Fe-4S]-type ferredoxin. Its function is as follows. Part of the multicomponent N,N-dimethyl phenylurea N-demethylase responsible for the initial N-demethylation step during the bacterial metabolism of N,N-dimethyl-substituted phenylurea herbicides. Catalyzes the mono-N-demethylation of N,N-dimethyl-substituted phenylurea herbicides to their mono-N-demethylated derivatives. Is active on isoproturon (IPU), chlorotoluron, metoxuron, monoron, diuron, fluometuron and fenuron, but cannot transform the N-methoxy-N-methyl-substituted herbicides. The sequence is that of N,N-dimethyl phenylurea N-demethylase subunit alpha from Sphingobium sp. (strain YBL2).